A 468-amino-acid chain; its full sequence is UDP-N-acetylmuramate--L-alanine ligase (468 aa).

112 to 118 (GTHGKTT) contacts ATP.

The protein belongs to the MurCDEF family.

Its subcellular location is the cytoplasm. The enzyme catalyses UDP-N-acetyl-alpha-D-muramate + L-alanine + ATP = UDP-N-acetyl-alpha-D-muramoyl-L-alanine + ADP + phosphate + H(+). It participates in cell wall biogenesis; peptidoglycan biosynthesis. In terms of biological role, cell wall formation. The polypeptide is UDP-N-acetylmuramate--L-alanine ligase (Neisseria meningitidis serogroup C (strain 053442)).